The sequence spans 334 residues: B3 domain-containing protein LOC_Os12g40090 (334 aa).

Positions 5-102 (RIRFFRLMTG…SFDVLIFDAS (98 aa)) form a DNA-binding region, TF-B3 1. Positions 142 to 178 (TSTPSVLIGSPHKASTSKKLSGKTKTNPRKEPEDPNC) are disordered. A compositionally biased stretch (low complexity) spans 154–166 (KASTSKKLSGKTK). The TF-B3 2 DNA-binding region spans 227 to 326 (FVVVLQTAHV…TMTVHVIGKA (100 aa)).

Its subcellular location is the nucleus. This Oryza sativa subsp. japonica (Rice) protein is B3 domain-containing protein LOC_Os12g40090.